The sequence spans 427 residues: MLDIRVVRQDPEGVARGLARRGLAAGLEHFLELDARRRNLLVEVEGLKNRRNQVSAEVARLKKSGQDATELIASMREVGERIKELDEKVRAVEEELRQEMLKLPNIPHASVPDGLSDADNKPVRHWGELPRFKFEPRPHWEIAENLGIVDFERGGKVAGARFVFYRGAGARLERALINFMLDLHTIKHGYTEIFPPYMVNSASMLGTGQLPKFAEDMFHVEGTDYYLIPTAEVPVTNLYRGEILPGEKLPIYHVAYSACFRAEAGAAGRDTRGLIRQHQFNKVELVKFTRPEDSYEELEKLTRDAEEVLQLLGLPYRVVALCAGDLGFSAAKTYDLEVWMPGTACYREISSCSNFEDFQARRADIRFRPGPKEKPRLVHTLNGSGVAVGRTVAAILENYQQEDGTVLIPPALKPYMGGLTSIQPEQD.

Threonine 230 to glutamate 232 provides a ligand contact to L-serine. Residue arginine 261–glutamate 263 participates in ATP binding. Residue glutamate 284 participates in L-serine binding. Residue glutamate 348 to serine 351 coordinates ATP. L-serine is bound at residue serine 384.

Belongs to the class-II aminoacyl-tRNA synthetase family. Type-1 seryl-tRNA synthetase subfamily. As to quaternary structure, homodimer. The tRNA molecule binds across the dimer.

It localises to the cytoplasm. The catalysed reaction is tRNA(Ser) + L-serine + ATP = L-seryl-tRNA(Ser) + AMP + diphosphate + H(+). It catalyses the reaction tRNA(Sec) + L-serine + ATP = L-seryl-tRNA(Sec) + AMP + diphosphate + H(+). Its pathway is aminoacyl-tRNA biosynthesis; selenocysteinyl-tRNA(Sec) biosynthesis; L-seryl-tRNA(Sec) from L-serine and tRNA(Sec): step 1/1. Its function is as follows. Catalyzes the attachment of serine to tRNA(Ser). Is also able to aminoacylate tRNA(Sec) with serine, to form the misacylated tRNA L-seryl-tRNA(Sec), which will be further converted into selenocysteinyl-tRNA(Sec). The sequence is that of Serine--tRNA ligase from Moorella thermoacetica (strain ATCC 39073 / JCM 9320).